The sequence spans 263 residues: Single-stranded DNA-binding protein WHY1, chloroplastic (263 aa).

The transit peptide at 1–47 (MSQLLSTPLMAVNSNPRFLSSSSVLVTGGFAVKRHGFALKPTTKTVK) directs the protein to the chloroplast. The required for ssDNA binding stretch occupies residues 89-94 (KGKAAL). The short motif at 167–180 (KGKSDEGKVRKVLK) is the Nuclear localization signal element.

Belongs to the Whirly family. Homotetramer.

The protein localises to the plastid. The protein resides in the chloroplast. Its subcellular location is the nucleus. In terms of biological role, single-stranded DNA-binding protein that functions in both chloroplasts and nucleus. In chloroplasts, maintains plastid genome stability by preventing break-induced and short homology-dependent illegitimate recombinations. In nucleus, modulates telomere length homeostasis by inhibiting the action of the telomerase at the extreme termini of chromosomes. Is recruited to a distal element upstream of the kinesin KP1 to mediate the transcriptional repression of KP1. Is required for full salicylic acid-dependent plant disease resistance responses. Can bind double-stranded DNA in vivo. This is Single-stranded DNA-binding protein WHY1, chloroplastic (WHY1) from Arabidopsis thaliana (Mouse-ear cress).